Consider the following 470-residue polypeptide: 6-phospho-beta-glucosidase BglB (470 aa).

Glu172 serves as the catalytic Proton donor. Residue Glu361 is the Nucleophile of the active site.

The protein belongs to the glycosyl hydrolase 1 family.

The enzyme catalyses 6-phospho-beta-D-glucosyl-(1-&gt;4)-D-glucose + H2O = D-glucose 6-phosphate + D-glucose. In terms of biological role, catalyzes the hydrolysis of phosphorylated beta-glucosides into glucose-6-phosphate (G-6-P) and aglycone. It has a high affinity for phosphorylated aromatic beta-glucosides (p-nitrophenyl-beta-glucoside, phenyl beta-glucoside, arbutin and phosphorylated salicin), and a low affinity for phosphorylated beta-methyl-glucoside. This chain is 6-phospho-beta-glucosidase BglB (bglB), found in Escherichia coli (strain K12).